The following is a 557-amino-acid chain: Urocanate hydratase (557 aa).

NAD(+)-binding positions include 48–49, Gln126, 178–180, Asp198, Arg203, 244–245, 265–269, 274–275, and Tyr323; these read GG, GMG, NA, QTSAH, and YL. Residue Cys411 is part of the active site. Residue Gly493 coordinates NAD(+).

It belongs to the urocanase family. It depends on NAD(+) as a cofactor.

Its subcellular location is the cytoplasm. It catalyses the reaction 4-imidazolone-5-propanoate = trans-urocanate + H2O. It participates in amino-acid degradation; L-histidine degradation into L-glutamate; N-formimidoyl-L-glutamate from L-histidine: step 2/3. Catalyzes the conversion of urocanate to 4-imidazolone-5-propionate. This is Urocanate hydratase from Beutenbergia cavernae (strain ATCC BAA-8 / DSM 12333 / CCUG 43141 / JCM 11478 / NBRC 16432 / NCIMB 13614 / HKI 0122).